A 378-amino-acid polypeptide reads, in one-letter code: Acetylornithine deacetylase (378 aa).

His-76 serves as a coordination point for Zn(2+). Asp-78 is an active-site residue. Asp-108 is a binding site for Zn(2+). Glu-140 is a catalytic residue. Zn(2+) is bound by residues Glu-141, Glu-165, and His-351.

The protein belongs to the peptidase M20A family. ArgE subfamily. As to quaternary structure, homodimer. Zn(2+) is required as a cofactor. It depends on Co(2+) as a cofactor. The cofactor is glutathione.

The protein resides in the cytoplasm. The enzyme catalyses N(2)-acetyl-L-ornithine + H2O = L-ornithine + acetate. The protein operates within amino-acid biosynthesis; L-arginine biosynthesis; L-ornithine from N(2)-acetyl-L-ornithine (linear): step 1/1. Catalyzes the hydrolysis of the amide bond of N(2)-acetylated L-amino acids. Cleaves the acetyl group from N-acetyl-L-ornithine to form L-ornithine, an intermediate in L-arginine biosynthesis pathway, and a branchpoint in the synthesis of polyamines. The sequence is that of Acetylornithine deacetylase from Vibrio campbellii (strain ATCC BAA-1116).